Reading from the N-terminus, the 209-residue chain is uncharacterized protein (209 aa).

This is an uncharacterized protein from Arabidopsis thaliana (Mouse-ear cress).